The sequence spans 357 residues: Protein RecA (357 aa).

67-74 (GPESSGKT) lines the ATP pocket.

It belongs to the RecA family.

It is found in the cytoplasm. In terms of biological role, can catalyze the hydrolysis of ATP in the presence of single-stranded DNA, the ATP-dependent uptake of single-stranded DNA by duplex DNA, and the ATP-dependent hybridization of homologous single-stranded DNAs. It interacts with LexA causing its activation and leading to its autocatalytic cleavage. This is Protein RecA from Leifsonia xyli subsp. xyli (strain CTCB07).